The sequence spans 159 residues: RNA pyrophosphohydrolase (159 aa).

Positions 6 to 149 constitute a Nudix hydrolase domain; it reads GFRPNVGIIL…KREVYRRALK (144 aa). The Nudix box motif lies at 38-59; the sequence is GGINARETPEEALFRELNEEVG.

Belongs to the Nudix hydrolase family. RppH subfamily. A divalent metal cation serves as cofactor.

Accelerates the degradation of transcripts by removing pyrophosphate from the 5'-end of triphosphorylated RNA, leading to a more labile monophosphorylated state that can stimulate subsequent ribonuclease cleavage. The sequence is that of RNA pyrophosphohydrolase from Stutzerimonas stutzeri (strain A1501) (Pseudomonas stutzeri).